The chain runs to 153 residues: Ribosomal RNA large subunit methyltransferase H (153 aa).

Residues leucine 70, glycine 102, and 121–126 each bind S-adenosyl-L-methionine; that span reads FSKMTF.

It belongs to the RNA methyltransferase RlmH family. Homodimer.

The protein resides in the cytoplasm. It catalyses the reaction pseudouridine(1915) in 23S rRNA + S-adenosyl-L-methionine = N(3)-methylpseudouridine(1915) in 23S rRNA + S-adenosyl-L-homocysteine + H(+). In terms of biological role, specifically methylates the pseudouridine at position 1915 (m3Psi1915) in 23S rRNA. This is Ribosomal RNA large subunit methyltransferase H from Desulfotalea psychrophila (strain LSv54 / DSM 12343).